Here is a 142-residue protein sequence, read N- to C-terminus: AVCVSLLGASIIPPQPLDLLQFNEMIECTIPGSFPLLDYMDYGCYCGTGGRGTPVDALDRCCKEHDDCYAQIKENPKCSSLLNVPYVKQYSYTCSEGNLTCSADNDECAAFICNCDRTAALCFAEVPYKRRNFRIDYKSRCQ.

7 cysteine pairs are disulfide-bonded: C28–C94, C44–C141, C46–C62, C61–C122, C68–C115, C78–C108, and C101–C113. Residues Y45, G47, and G49 each contribute to the Ca(2+) site. H65 is a catalytic residue. D66 lines the Ca(2+) pocket. Residue D116 is part of the active site.

This sequence belongs to the phospholipase A2 family. Group I subfamily. D49 sub-subfamily. The cofactor is Ca(2+). Expressed by the venom gland.

The protein localises to the secreted. The enzyme catalyses a 1,2-diacyl-sn-glycero-3-phosphocholine + H2O = a 1-acyl-sn-glycero-3-phosphocholine + a fatty acid + H(+). Functionally, PLA2 catalyzes the calcium-dependent hydrolysis of the 2-acyl groups in 3-sn-phosphoglycerides. This Bungarus fasciatus (Banded krait) protein is Acidic phospholipase A2 KBf-grIB.